The primary structure comprises 869 residues: Valine--tRNA ligase (869 aa).

Positions 51 to 61 match the 'HIGH' region motif; sequence PNVTGNLHLGH. The short motif at 523–527 is the 'KMSKS' region element; that stretch reads KMSKS. Residue Lys-526 participates in ATP binding. Residues 797–869 adopt a coiled-coil conformation; that stretch reads EDLLGSNNEA…ELEKLLSSHK (73 aa).

Belongs to the class-I aminoacyl-tRNA synthetase family. ValS type 1 subfamily. As to quaternary structure, monomer.

It is found in the cytoplasm. The enzyme catalyses tRNA(Val) + L-valine + ATP = L-valyl-tRNA(Val) + AMP + diphosphate. In terms of biological role, catalyzes the attachment of valine to tRNA(Val). As ValRS can inadvertently accommodate and process structurally similar amino acids such as threonine, to avoid such errors, it has a 'posttransfer' editing activity that hydrolyzes mischarged Thr-tRNA(Val) in a tRNA-dependent manner. In Malacoplasma penetrans (strain HF-2) (Mycoplasma penetrans), this protein is Valine--tRNA ligase.